The primary structure comprises 144 residues: Deoxyuridine 5'-triphosphate nucleotidohydrolase (144 aa).

Substrate is bound by residues 63–65 (RSG), N76, and 80–82 (TID).

This sequence belongs to the dUTPase family. Mg(2+) serves as cofactor.

The enzyme catalyses dUTP + H2O = dUMP + diphosphate + H(+). The protein operates within pyrimidine metabolism; dUMP biosynthesis; dUMP from dCTP (dUTP route): step 2/2. Functionally, this enzyme is involved in nucleotide metabolism: it produces dUMP, the immediate precursor of thymidine nucleotides and it decreases the intracellular concentration of dUTP so that uracil cannot be incorporated into DNA. The protein is Deoxyuridine 5'-triphosphate nucleotidohydrolase of Bacteroides thetaiotaomicron (strain ATCC 29148 / DSM 2079 / JCM 5827 / CCUG 10774 / NCTC 10582 / VPI-5482 / E50).